The primary structure comprises 520 residues: Probable cytochrome P450 4p2 (520 aa).

Heme contacts are provided by E325 and C464.

Belongs to the cytochrome P450 family. Heme serves as cofactor.

It localises to the endoplasmic reticulum membrane. It is found in the microsome membrane. Functionally, may be involved in the metabolism of insect hormones and in the breakdown of synthetic insecticides. In Drosophila melanogaster (Fruit fly), this protein is Probable cytochrome P450 4p2 (Cyp4p2).